Consider the following 159-residue polypeptide: Small ribosomal subunit protein uS17 (159 aa).

Belongs to the universal ribosomal protein uS17 family.

This is Small ribosomal subunit protein uS17 (RPS11) from Euphorbia esula (Leafy spurge).